We begin with the raw amino-acid sequence, 184 residues long: Threonylcarbamoyl-AMP synthase (184 aa).

The region spanning 1 to 184 is the YrdC-like domain; sequence MNNLLAVIEL…IFTQHIFRQG (184 aa).

Belongs to the SUA5 family. TsaC subfamily.

Its subcellular location is the cytoplasm. The enzyme catalyses L-threonine + hydrogencarbonate + ATP = L-threonylcarbamoyladenylate + diphosphate + H2O. Functionally, required for the formation of a threonylcarbamoyl group on adenosine at position 37 (t(6)A37) in tRNAs that read codons beginning with adenine. Catalyzes the conversion of L-threonine, HCO(3)(-)/CO(2) and ATP to give threonylcarbamoyl-AMP (TC-AMP) as the acyladenylate intermediate, with the release of diphosphate. The protein is Threonylcarbamoyl-AMP synthase of Haemophilus ducreyi (strain 35000HP / ATCC 700724).